We begin with the raw amino-acid sequence, 241 residues long: Anti-Pycsar protein Apyc1 (241 aa).

Residues 17–215 (DNNNALLEQD…SVQKKTWLMH (199 aa)) are beta-lactamase-like. Residues His-59, His-61, Asp-63, His-64, His-142, Asp-162, and His-215 each contribute to the Zn(2+) site.

This sequence belongs to the nuclease anti-Pycsar protein Apyc1 family. As to quaternary structure, homodimer. Zn(2+) serves as cofactor.

The catalysed reaction is 3',5'-cyclic CMP + H2O = CMP + H(+). The enzyme catalyses 3',5'-cyclic UMP + H2O = UMP + H(+). Its function is as follows. Counteracts the endogenous Pycsar antiviral defense system. Phosphodiesterase that enables metal-dependent hydrolysis of host cyclic nucleotide Pycsar defense signals such as cCMP and cUMP. This is Anti-Pycsar protein Apyc1 from Paenibacillus harenae.